Here is a 53-residue protein sequence, read N- to C-terminus: Small ribosomal subunit protein uS14m (53 aa).

This sequence belongs to the universal ribosomal protein uS14 family.

Its subcellular location is the mitochondrion. In Bigelowiella natans (Pedinomonas minutissima), this protein is Small ribosomal subunit protein uS14m (RPS14).